We begin with the raw amino-acid sequence, 424 residues long: Histidinol dehydrogenase homolog (424 aa).

Residues glutamine 250 and histidine 253 each coordinate Zn(2+). Residues glutamate 318 and histidine 319 each act as proton acceptor in the active site. Zn(2+) contacts are provided by aspartate 352 and histidine 411.

Belongs to the histidinol dehydrogenase family. The cofactor is Zn(2+).

The protein is Histidinol dehydrogenase homolog of Shouchella clausii (strain KSM-K16) (Alkalihalobacillus clausii).